The chain runs to 261 residues: MRLALGIEYDGAGFCGWQSQPNRLAVQDALESALSQLAGHQVRVSAAGRTDTGVHALSQVVHFDTEAVRSQTAWVRGVNTKLPRGVRVLWAKEVDPRFHARFDAYQRSYQYWLINQPVAPAVMAGKAGWFHQPLDLQAMQEAMAYLLGQHDFSAFRAAECQAKSPVKTMHHASVSAFGSSMIFDFCASAFLHHQVRNMVGALVYIGKGKYPPVFIAELLEKRDRRCSPPTFSPDGLYLTGVGYDGCWGLPGTERKLQIGIA.

The active-site Nucleophile is D51. Y109 contacts substrate.

Belongs to the tRNA pseudouridine synthase TruA family. As to quaternary structure, homodimer.

It carries out the reaction uridine(38/39/40) in tRNA = pseudouridine(38/39/40) in tRNA. Its function is as follows. Formation of pseudouridine at positions 38, 39 and 40 in the anticodon stem and loop of transfer RNAs. The sequence is that of tRNA pseudouridine synthase A from Methylobacillus flagellatus (strain ATCC 51484 / DSM 6875 / VKM B-1610 / KT).